Here is a 78-residue protein sequence, read N- to C-terminus: Putative defensin-like protein 288 (78 aa).

The first 21 residues, 1 to 21 (MSNLRLTIAVFLAALFQTLWW), serve as a signal peptide directing secretion.

Belongs to the DEFL family.

Its subcellular location is the secreted. In Arabidopsis thaliana (Mouse-ear cress), this protein is Putative defensin-like protein 288.